Reading from the N-terminus, the 159-residue chain is Ribosomal RNA large subunit methyltransferase H (159 aa).

Residues Leu-76, Gly-108, and 127 to 132 (FSKMTF) each bind S-adenosyl-L-methionine.

The protein belongs to the RNA methyltransferase RlmH family. Homodimer.

Its subcellular location is the cytoplasm. It carries out the reaction pseudouridine(1915) in 23S rRNA + S-adenosyl-L-methionine = N(3)-methylpseudouridine(1915) in 23S rRNA + S-adenosyl-L-homocysteine + H(+). In terms of biological role, specifically methylates the pseudouridine at position 1915 (m3Psi1915) in 23S rRNA. This Geobacillus kaustophilus (strain HTA426) protein is Ribosomal RNA large subunit methyltransferase H.